A 248-amino-acid polypeptide reads, in one-letter code: Ras-related protein RSR1 (248 aa).

10–17 (GAGGVGKS) contacts GTP. An Effector region motif is present at residues 32-40 (YDPTIEDSY). Residues 57–61 (DTAGV) and 116–119 (NKCD) each bind GTP. The disordered stretch occupies residues 182 to 248 (LQKQQQQQQQ…SSGSKFCTII (67 aa)). Over residues 184-214 (KQQQQQQQEQDAEGQQQQQKSGKSKSSATQK) the composition is skewed to low complexity. Composition is skewed to polar residues over residues 219 to 231 (DGQT…LKQS) and 238 to 248 (SSSGSKFCTII). Cysteine methyl ester is present on Cys-245. Cys-245 carries S-geranylgeranyl cysteine lipidation. Positions 246 to 248 (TII) are cleaved as a propeptide — removed in mature form.

This sequence belongs to the small GTPase superfamily. Ras family.

It is found in the cell membrane. The enzyme catalyses GTP + H2O = GDP + phosphate + H(+). Its activity is regulated as follows. Alternates between an inactive form bound to GDP and an active form bound to GTP. Activated by a guanine nucleotide-exchange factor (GEF) and inactivated by a GTPase-activating protein (GAP). Ras-related protein which binds GDP/GTP and possesses intrinsic GTPase activity. Involved in both yeast and hypha development. In the yeast phase, it is required for normal (polar) bud site selection and is involved in cell morphogenesis; in the yeast-mycelial transition it is involved in germ tube emergence; and in the development of the hyphae it is involved in cell elongation. This Candida albicans (Yeast) protein is Ras-related protein RSR1 (RSR1).